A 401-amino-acid chain; its full sequence is Phosphoglycerate kinase (401 aa).

Residues 21 to 23, arginine 37, 60 to 63, arginine 119, and arginine 152 contribute to the substrate site; these read DLN and HLGR. Residues lysine 203, glutamate 325, and 351–354 contribute to the ATP site; that span reads GGDT.

Belongs to the phosphoglycerate kinase family. As to quaternary structure, monomer.

The protein localises to the cytoplasm. It catalyses the reaction (2R)-3-phosphoglycerate + ATP = (2R)-3-phospho-glyceroyl phosphate + ADP. Its pathway is carbohydrate degradation; glycolysis; pyruvate from D-glyceraldehyde 3-phosphate: step 2/5. The sequence is that of Phosphoglycerate kinase from Acidithiobacillus ferrooxidans (strain ATCC 23270 / DSM 14882 / CIP 104768 / NCIMB 8455) (Ferrobacillus ferrooxidans (strain ATCC 23270)).